We begin with the raw amino-acid sequence, 275 residues long: Large ribosomal subunit protein uL2 (275 aa).

The span at 38 to 53 (SSKAGRNNNGRITTRH) shows a compositional bias: polar residues. 2 disordered regions span residues 38 to 59 (SSKA…GGHK) and 224 to 257 (AMNP…KGFR).

This sequence belongs to the universal ribosomal protein uL2 family. As to quaternary structure, part of the 50S ribosomal subunit. Forms a bridge to the 30S subunit in the 70S ribosome.

Functionally, one of the primary rRNA binding proteins. Required for association of the 30S and 50S subunits to form the 70S ribosome, for tRNA binding and peptide bond formation. It has been suggested to have peptidyltransferase activity; this is somewhat controversial. Makes several contacts with the 16S rRNA in the 70S ribosome. In Burkholderia multivorans (strain ATCC 17616 / 249), this protein is Large ribosomal subunit protein uL2.